Consider the following 508-residue polypeptide: Photosystem II CP47 reaction center protein (508 aa).

6 helical membrane-spanning segments follow: residues 21–36, 101–115, 140–156, 203–218, 237–252, and 457–472; these read SVHI…WAGS, IVFS…IWHW, GIHL…FGAF, IAAG…FHLS, VLSS…AFVV, and SFAL…HGAR.

It belongs to the PsbB/PsbC family. PsbB subfamily. PSII is composed of 1 copy each of membrane proteins PsbA, PsbB, PsbC, PsbD, PsbE, PsbF, PsbH, PsbI, PsbJ, PsbK, PsbL, PsbM, PsbT, PsbX, PsbY, PsbZ, Psb30/Ycf12, at least 3 peripheral proteins of the oxygen-evolving complex and a large number of cofactors. It forms dimeric complexes. It depends on Binds multiple chlorophylls. PSII binds additional chlorophylls, carotenoids and specific lipids. as a cofactor.

The protein localises to the plastid. Its subcellular location is the chloroplast thylakoid membrane. Functionally, one of the components of the core complex of photosystem II (PSII). It binds chlorophyll and helps catalyze the primary light-induced photochemical processes of PSII. PSII is a light-driven water:plastoquinone oxidoreductase, using light energy to abstract electrons from H(2)O, generating O(2) and a proton gradient subsequently used for ATP formation. In Eucalyptus globulus subsp. globulus (Tasmanian blue gum), this protein is Photosystem II CP47 reaction center protein.